The chain runs to 208 residues: Sodium/potassium-transporting ATPase subunit beta-1-interacting protein 4 (208 aa).

4 helical membrane passes run 10 to 30 (LILL…FDFL), 35 to 55 (APIL…FGTL), 62 to 82 (VIAY…LICF), and 151 to 171 (ALQI…TSVF).

Belongs to the NKAIN family. Interacts with atp1b1 C-terminus.

It localises to the cell membrane. This is Sodium/potassium-transporting ATPase subunit beta-1-interacting protein 4 (nkain4) from Xenopus tropicalis (Western clawed frog).